The chain runs to 38 residues: Photosystem II reaction center protein L (38 aa).

The chain crosses the membrane as a helical span at residues 17-37 (SLYWGLLLIFVLAVLFSSYIF).

The protein belongs to the PsbL family. In terms of assembly, PSII is composed of 1 copy each of membrane proteins PsbA, PsbB, PsbC, PsbD, PsbE, PsbF, PsbH, PsbI, PsbJ, PsbK, PsbL, PsbM, PsbT, PsbY, PsbZ, Psb30/Ycf12, at least 3 peripheral proteins of the oxygen-evolving complex and a large number of cofactors. It forms dimeric complexes.

The protein resides in the plastid. It is found in the chloroplast thylakoid membrane. In terms of biological role, one of the components of the core complex of photosystem II (PSII). PSII is a light-driven water:plastoquinone oxidoreductase that uses light energy to abstract electrons from H(2)O, generating O(2) and a proton gradient subsequently used for ATP formation. It consists of a core antenna complex that captures photons, and an electron transfer chain that converts photonic excitation into a charge separation. This subunit is found at the monomer-monomer interface and is required for correct PSII assembly and/or dimerization. The polypeptide is Photosystem II reaction center protein L (Euglena gracilis).